Consider the following 202-residue polypeptide: Probable cytochrome c oxidase subunit 3 (202 aa).

The next 5 helical transmembrane spans lie at 30-50 (VVWLSSELMFFAGLFAMYFTA), 69-89 (AVPVTLVLIASSFTCQMGVFS), 101-121 (WYVITLLMGLFFVLGQGYEYY), 141-161 (LATGFHGLHVTGGLIAFIFLL), and 178-198 (IVVSYYWHFVDIVWIALFTVI).

The protein belongs to the cytochrome c oxidase subunit 3 family.

The protein localises to the cell membrane. The catalysed reaction is 4 Fe(II)-[cytochrome c] + O2 + 8 H(+)(in) = 4 Fe(III)-[cytochrome c] + 2 H2O + 4 H(+)(out). The sequence is that of Probable cytochrome c oxidase subunit 3 (ctaE) from Mycobacterium leprae (strain TN).